Here is a 72-residue protein sequence, read N- to C-terminus: Prokaryotic ubiquitin-like protein Pup (72 aa).

Gly residues predominate over residues 1-10 (MATKDTGGGQ). Residues 1-45 (MATKDTGGGQQKATRNTEEVEEQAQDAQASEDLKERQEKLSDDVD) form a disordered region. The stretch at 9 to 60 (GQQKATRNTEEVEEQAQDAQASEDLKERQEKLSDDVDSVLDEIDDVLEENAE) forms a coiled coil. The segment at 28–66 (QASEDLKERQEKLSDDVDSVLDEIDDVLEENAEDFVRSF) is ARC ATPase binding. The segment covering 31–42 (EDLKERQEKLSD) has biased composition (basic and acidic residues). Residue Glu-72 forms an Isoglutamyl lysine isopeptide (Glu-Lys) (interchain with K-? in acceptor proteins) linkage.

Belongs to the prokaryotic ubiquitin-like protein family. In terms of assembly, strongly interacts with the proteasome-associated ATPase ARC through a hydrophobic interface; the interacting region of Pup lies in its C-terminal half. There is one Pup binding site per ARC hexamer ring.

Its pathway is protein degradation; proteasomal Pup-dependent pathway. Protein modifier that is covalently attached to lysine residues of substrate proteins, thereby targeting them for proteasomal degradation. The tagging system is termed pupylation. The polypeptide is Prokaryotic ubiquitin-like protein Pup (Streptomyces avermitilis (strain ATCC 31267 / DSM 46492 / JCM 5070 / NBRC 14893 / NCIMB 12804 / NRRL 8165 / MA-4680)).